The sequence spans 378 residues: Ribosomal RNA large subunit methyltransferase G (378 aa).

The protein belongs to the methyltransferase superfamily. RlmG family.

Its subcellular location is the cytoplasm. It catalyses the reaction guanosine(1835) in 23S rRNA + S-adenosyl-L-methionine = N(2)-methylguanosine(1835) in 23S rRNA + S-adenosyl-L-homocysteine + H(+). Specifically methylates the guanine in position 1835 (m2G1835) of 23S rRNA. The polypeptide is Ribosomal RNA large subunit methyltransferase G (Shigella boydii serotype 18 (strain CDC 3083-94 / BS512)).